A 450-amino-acid polypeptide reads, in one-letter code: uncharacterized protein (450 aa).

The span at glutamate 387–lysine 416 shows a compositional bias: basic and acidic residues. A disordered region spans residues glutamate 387–glutamate 439.

This is an uncharacterized protein from Saccharomyces cerevisiae (strain ATCC 204508 / S288c) (Baker's yeast).